Here is a 274-residue protein sequence, read N- to C-terminus: 2,3,4,5-tetrahydropyridine-2,6-dicarboxylate N-succinyltransferase (274 aa).

2 residues coordinate substrate: R107 and D144.

The protein belongs to the transferase hexapeptide repeat family. Homotrimer.

The protein localises to the cytoplasm. It catalyses the reaction (S)-2,3,4,5-tetrahydrodipicolinate + succinyl-CoA + H2O = (S)-2-succinylamino-6-oxoheptanedioate + CoA. Its pathway is amino-acid biosynthesis; L-lysine biosynthesis via DAP pathway; LL-2,6-diaminopimelate from (S)-tetrahydrodipicolinate (succinylase route): step 1/3. This chain is 2,3,4,5-tetrahydropyridine-2,6-dicarboxylate N-succinyltransferase, found in Cereibacter sphaeroides (strain ATCC 17029 / ATH 2.4.9) (Rhodobacter sphaeroides).